Consider the following 405-residue polypeptide: S-adenosylmethionine synthase (405 aa).

139 to 144 (GQGSVD) contacts ATP.

This sequence belongs to the AdoMet synthase 2 family. It depends on Mg(2+) as a cofactor.

It carries out the reaction L-methionine + ATP + H2O = S-adenosyl-L-methionine + phosphate + diphosphate. It functions in the pathway amino-acid biosynthesis; S-adenosyl-L-methionine biosynthesis; S-adenosyl-L-methionine from L-methionine: step 1/1. Functionally, catalyzes the formation of S-adenosylmethionine from methionine and ATP. This Thermococcus onnurineus (strain NA1) protein is S-adenosylmethionine synthase.